Consider the following 281-residue polypeptide: Probable endonuclease 4 (281 aa).

Zn(2+)-binding residues include histidine 69, histidine 109, glutamate 145, aspartate 179, histidine 182, histidine 216, aspartate 229, histidine 231, and glutamate 261.

The protein belongs to the AP endonuclease 2 family. Zn(2+) is required as a cofactor.

The enzyme catalyses Endonucleolytic cleavage to 5'-phosphooligonucleotide end-products.. Endonuclease IV plays a role in DNA repair. It cleaves phosphodiester bonds at apurinic or apyrimidinic (AP) sites, generating a 3'-hydroxyl group and a 5'-terminal sugar phosphate. The chain is Probable endonuclease 4 from Aeromonas hydrophila subsp. hydrophila (strain ATCC 7966 / DSM 30187 / BCRC 13018 / CCUG 14551 / JCM 1027 / KCTC 2358 / NCIMB 9240 / NCTC 8049).